The sequence spans 188 residues: Mitochondrial import inner membrane translocase subunit Tim23B (188 aa).

The next 2 helical transmembrane spans lie at 73 to 93 (FELA…FGAM) and 125 to 145 (ALWA…GVII).

It belongs to the Tim17/Tim22/Tim23 family.

The protein resides in the mitochondrion inner membrane. Its function is as follows. May participate in the translocation of transit peptide-containing proteins across the mitochondrial inner membrane. the PAM complex. The protein is Mitochondrial import inner membrane translocase subunit Tim23B of Homo sapiens (Human).